Reading from the N-terminus, the 247-residue chain is 3-deoxy-manno-octulosonate cytidylyltransferase (247 aa).

This sequence belongs to the KdsB family.

The protein localises to the cytoplasm. It catalyses the reaction 3-deoxy-alpha-D-manno-oct-2-ulosonate + CTP = CMP-3-deoxy-beta-D-manno-octulosonate + diphosphate. It participates in nucleotide-sugar biosynthesis; CMP-3-deoxy-D-manno-octulosonate biosynthesis; CMP-3-deoxy-D-manno-octulosonate from 3-deoxy-D-manno-octulosonate and CTP: step 1/1. Its pathway is bacterial outer membrane biogenesis; lipopolysaccharide biosynthesis. Activates KDO (a required 8-carbon sugar) for incorporation into bacterial lipopolysaccharide in Gram-negative bacteria. This chain is 3-deoxy-manno-octulosonate cytidylyltransferase, found in Methylorubrum extorquens (strain CM4 / NCIMB 13688) (Methylobacterium extorquens).